Here is a 104-residue protein sequence, read N- to C-terminus: Small ribosomal subunit protein uS10 (104 aa).

The protein belongs to the universal ribosomal protein uS10 family. As to quaternary structure, part of the 30S ribosomal subunit.

In terms of biological role, involved in the binding of tRNA to the ribosomes. The polypeptide is Small ribosomal subunit protein uS10 (Ralstonia nicotianae (strain ATCC BAA-1114 / GMI1000) (Ralstonia solanacearum)).